The sequence spans 244 residues: 1-(5-phosphoribosyl)-5-[(5-phosphoribosylamino)methylideneamino] imidazole-4-carboxamide isomerase (244 aa).

Aspartate 10 serves as the catalytic Proton acceptor. Aspartate 129 (proton donor) is an active-site residue.

This sequence belongs to the HisA/HisF family.

The protein localises to the cytoplasm. It carries out the reaction 1-(5-phospho-beta-D-ribosyl)-5-[(5-phospho-beta-D-ribosylamino)methylideneamino]imidazole-4-carboxamide = 5-[(5-phospho-1-deoxy-D-ribulos-1-ylimino)methylamino]-1-(5-phospho-beta-D-ribosyl)imidazole-4-carboxamide. It participates in amino-acid biosynthesis; L-histidine biosynthesis; L-histidine from 5-phospho-alpha-D-ribose 1-diphosphate: step 4/9. The chain is 1-(5-phosphoribosyl)-5-[(5-phosphoribosylamino)methylideneamino] imidazole-4-carboxamide isomerase from Rhodococcus opacus (strain B4).